A 446-amino-acid polypeptide reads, in one-letter code: N-succinylarginine dihydrolase (446 aa).

Residues 19-28 (AGLSFGNVAS), asparagine 110, and 137-138 (HR) contribute to the substrate site. Residue glutamate 174 is part of the active site. Arginine 213 is a binding site for substrate. Residue histidine 249 is part of the active site. The substrate site is built by aspartate 251 and asparagine 364. The Nucleophile role is filled by cysteine 370.

It belongs to the succinylarginine dihydrolase family. Homodimer.

It carries out the reaction N(2)-succinyl-L-arginine + 2 H2O + 2 H(+) = N(2)-succinyl-L-ornithine + 2 NH4(+) + CO2. The protein operates within amino-acid degradation; L-arginine degradation via AST pathway; L-glutamate and succinate from L-arginine: step 2/5. In terms of biological role, catalyzes the hydrolysis of N(2)-succinylarginine into N(2)-succinylornithine, ammonia and CO(2). This Burkholderia multivorans (strain ATCC 17616 / 249) protein is N-succinylarginine dihydrolase.